Consider the following 414-residue polypeptide: Serine hydroxymethyltransferase (414 aa).

Residues L116 and 120–122 (GHL) each bind (6S)-5,6,7,8-tetrahydrofolate. At K224 the chain carries N6-(pyridoxal phosphate)lysine. (6S)-5,6,7,8-tetrahydrofolate contacts are provided by residues E240 and 348-350 (SPF).

Belongs to the SHMT family. Homodimer. The cofactor is pyridoxal 5'-phosphate.

The protein resides in the cytoplasm. The catalysed reaction is (6R)-5,10-methylene-5,6,7,8-tetrahydrofolate + glycine + H2O = (6S)-5,6,7,8-tetrahydrofolate + L-serine. Its pathway is one-carbon metabolism; tetrahydrofolate interconversion. The protein operates within amino-acid biosynthesis; glycine biosynthesis; glycine from L-serine: step 1/1. Catalyzes the reversible interconversion of serine and glycine with tetrahydrofolate (THF) serving as the one-carbon carrier. This reaction serves as the major source of one-carbon groups required for the biosynthesis of purines, thymidylate, methionine, and other important biomolecules. Also exhibits THF-independent aldolase activity toward beta-hydroxyamino acids, producing glycine and aldehydes, via a retro-aldol mechanism. The chain is Serine hydroxymethyltransferase from Campylobacter fetus subsp. fetus (strain 82-40).